The chain runs to 445 residues: Phosphoglucosamine mutase (445 aa).

Ser-104 acts as the Phosphoserine intermediate in catalysis. The Mg(2+) site is built by Ser-104, Asp-243, Asp-245, and Asp-247. The residue at position 104 (Ser-104) is a Phosphoserine.

This sequence belongs to the phosphohexose mutase family. The cofactor is Mg(2+). Activated by phosphorylation.

The catalysed reaction is alpha-D-glucosamine 1-phosphate = D-glucosamine 6-phosphate. Functionally, catalyzes the conversion of glucosamine-6-phosphate to glucosamine-1-phosphate. The chain is Phosphoglucosamine mutase from Neisseria subflava.